Reading from the N-terminus, the 181-residue chain is ATP-dependent protease subunit HslV (181 aa).

Thr7 is an active-site residue. Positions 162, 165, and 168 each coordinate Na(+).

Belongs to the peptidase T1B family. HslV subfamily. A double ring-shaped homohexamer of HslV is capped on each side by a ring-shaped HslU homohexamer. The assembly of the HslU/HslV complex is dependent on binding of ATP.

The protein resides in the cytoplasm. It catalyses the reaction ATP-dependent cleavage of peptide bonds with broad specificity.. With respect to regulation, allosterically activated by HslU binding. Protease subunit of a proteasome-like degradation complex believed to be a general protein degrading machinery. The polypeptide is ATP-dependent protease subunit HslV (Coxiella burnetii (strain Dugway 5J108-111)).